The sequence spans 161 residues: 3-isopropylmalate dehydratase small subunit (161 aa).

Belongs to the LeuD family. LeuD type 2 subfamily. In terms of assembly, heterodimer of LeuC and LeuD.

The enzyme catalyses (2R,3S)-3-isopropylmalate = (2S)-2-isopropylmalate. It participates in amino-acid biosynthesis; L-leucine biosynthesis; L-leucine from 3-methyl-2-oxobutanoate: step 2/4. Catalyzes the isomerization between 2-isopropylmalate and 3-isopropylmalate, via the formation of 2-isopropylmaleate. The sequence is that of 3-isopropylmalate dehydratase small subunit from Pyrobaculum islandicum (strain DSM 4184 / JCM 9189 / GEO3).